We begin with the raw amino-acid sequence, 134 residues long: Putative STAG3-like protein 2 (134 aa).

Residues 10–95 form the SCD domain; the sequence is PKVTCRDVLP…GRFKDWMVSM (86 aa).

The protein belongs to the SCC3 family.

It localises to the nucleus. In Homo sapiens (Human), this protein is Putative STAG3-like protein 2 (STAG3L2).